Here is a 385-residue protein sequence, read N- to C-terminus: Putative ESX-1 scaffolding and assembly protein SaeC (385 aa).

Its subcellular location is the cytoplasm. May be involved in assembly of the ESX-1 / type VII specialized secretion system (T7SS), which exports several proteins including EsxA and EsxB. Involved in DNA conjugation in recipient (MKD8) strain. This Mycolicibacterium smegmatis (strain ATCC 700084 / mc(2)155) (Mycobacterium smegmatis) protein is Putative ESX-1 scaffolding and assembly protein SaeC.